Consider the following 257-residue polypeptide: Triosephosphate isomerase (257 aa).

Residues Asn-12 and Lys-14 each coordinate substrate. His-98 serves as the catalytic Electrophile. Glu-169 acts as the Proton acceptor in catalysis.

This sequence belongs to the triosephosphate isomerase family. In terms of assembly, homodimer.

The enzyme catalyses D-glyceraldehyde 3-phosphate = dihydroxyacetone phosphate. It participates in carbohydrate biosynthesis; gluconeogenesis. It functions in the pathway carbohydrate degradation; glycolysis; D-glyceraldehyde 3-phosphate from glycerone phosphate: step 1/1. The polypeptide is Triosephosphate isomerase (tpiA) (Dictyostelium discoideum (Social amoeba)).